Here is a 709-residue protein sequence, read N- to C-terminus: Transcriptional factor SWI5 (709 aa).

S225 bears the Phosphoserine mark. The span at 245 to 264 (LSPMISPPMSNTSFTGSPSR) shows a compositional bias: polar residues. Residues 245–267 (LSPMISPPMSNTSFTGSPSRRNN) are disordered. Phosphoserine is present on residues S278 and S300. T339 is modified (phosphothreonine). A Phosphoserine modification is found at S376. Residues 443-483 (LKPPSQQARHREGVFNDLDPNVLTKNTDNEGDDNEENEPES) are disordered. The segment covering 471-480 (NEGDDNEENE) has biased composition (acidic residues). Phosphoserine occurs at positions 488, 492, and 505. A Phosphoserine; by CDC28 modification is found at S522. 3 C2H2-type zinc fingers span residues 550–574 (FECL…IQTH), 580–604 (YSCD…KKSH), and 609–632 (YACP…RMIC). Positions 635–659 (GKKYENVVIKRSPRKRGRPRKDGTS) match the Nuclear localization signal motif. The tract at residues 644–677 (KRSPRKRGRPRKDGTSSVSSSPIKENINKDHNGQ) is disordered. S646 carries the post-translational modification Phosphoserine; by CDC28. The a.T hook DNA-binding region spans 647 to 659 (PRKRGRPRKDGTS). S664 is subject to Phosphoserine; by CDC28.

Cell cycle-dependent phosphorylation of three serine residues prevents SWI5 from entering the nucleus, and it accumulates in the cytoplasm. As a consequence of CDC28 kinase inactivation at the end of anaphase, the three serine residues are dephosphorylated and SWI5 enters the nucleus to activate transcription. It is then rapidly degraded. Threonine phosphorylation also seems to occur. Post-translationally, phosphorylated by PHO85.

It is found in the nucleus. Its subcellular location is the cytoplasm. Its function is as follows. Determines the mother-cell-specific transcription of the HO endonuclease gene that is responsible for the initiation of mating-type switching in yeast. Recognizes a specific sequence in the promoter of the HO gene. Activates EGT2 transcription in a concentration-dependent manner. Synthesized during G2 and early mitosis. The polypeptide is Transcriptional factor SWI5 (SWI5) (Saccharomyces cerevisiae (strain ATCC 204508 / S288c) (Baker's yeast)).